Reading from the N-terminus, the 201-residue chain is Cardiotrophin-1 (201 aa).

The protein belongs to the IL-6 superfamily. As to expression, highly expressed in heart, skeletal muscle, prostate and ovary. Lower levels in lung, kidney, pancreas, thymus, testis and small intestine. Little or no expression in brain, placenta, liver, spleen, colon or peripheral blood leukocytes.

It localises to the secreted. Induces cardiac myocyte hypertrophy in vitro. Binds to and activates the ILST/gp130 receptor. The sequence is that of Cardiotrophin-1 (CTF1) from Homo sapiens (Human).